We begin with the raw amino-acid sequence, 122 residues long: Ribosome-binding factor A (122 aa).

It belongs to the RbfA family. As to quaternary structure, monomer. Binds 30S ribosomal subunits, but not 50S ribosomal subunits or 70S ribosomes.

It is found in the cytoplasm. Functionally, one of several proteins that assist in the late maturation steps of the functional core of the 30S ribosomal subunit. Associates with free 30S ribosomal subunits (but not with 30S subunits that are part of 70S ribosomes or polysomes). Required for efficient processing of 16S rRNA. May interact with the 5'-terminal helix region of 16S rRNA. The protein is Ribosome-binding factor A of Streptococcus agalactiae serotype III (strain NEM316).